The following is a 376-amino-acid chain: Putative F-box/FBD/LRR-repeat protein At5g52460 (376 aa).

Residues 16–75 (RDEISSLPDDLLIQILLLVPIKDAVGTMILSKRWRYVWTLLPKLEYSDPGDECESVWKFL) enclose the F-box domain. 2 LRR repeats span residues 131 to 154 (CKTL…VCLP) and 199 to 224 (FAKV…KFLK). In terms of domain architecture, FBD spans 296 to 348 (CHGTNQGTVPRCLSAHLDEEFVWHGYRGNEEETQLIRYIFANAKCLKKREIST).

The protein is Putative F-box/FBD/LRR-repeat protein At5g52460 (EDA41) of Arabidopsis thaliana (Mouse-ear cress).